The following is a 146-amino-acid chain: uncharacterized protein (146 aa).

The helical transmembrane segment at 7 to 24 threads the bilayer; it reads VIALFLVTGLTLYAIRLL.

Its subcellular location is the membrane. This is an uncharacterized protein from Haemophilus influenzae (strain ATCC 51907 / DSM 11121 / KW20 / Rd).